The following is a 169-amino-acid chain: Sorting nexin-24 (169 aa).

M1 is modified (N-acetylmethionine). In terms of domain architecture, PX spans 1 to 125; sequence MEVYIPSFRY…SFDETESEES (125 aa). Residues R38, S40, K61, and R74 each coordinate a 1,2-diacyl-sn-glycero-3-phospho-(1D-myo-inositol-3-phosphate). 2 positions are modified to phosphoserine: S113 and S116.

It belongs to the sorting nexin family.

Its subcellular location is the cytoplasmic vesicle membrane. In terms of biological role, may be involved in several stages of intracellular trafficking. The polypeptide is Sorting nexin-24 (SNX24) (Homo sapiens (Human)).